Consider the following 560-residue polypeptide: Dihydroxy-acid dehydratase (560 aa).

Cys52 is a [2Fe-2S] cluster binding site. Asp84 contributes to the Mg(2+) binding site. Cys125 contributes to the [2Fe-2S] cluster binding site. Mg(2+) contacts are provided by Asp126 and Lys127. Lys127 bears the N6-carboxylysine mark. Cys197 contributes to the [2Fe-2S] cluster binding site. Residue Glu448 participates in Mg(2+) binding. Residue Ser474 is the Proton acceptor of the active site.

Belongs to the IlvD/Edd family. In terms of assembly, homodimer. The cofactor is [2Fe-2S] cluster. It depends on Mg(2+) as a cofactor.

It carries out the reaction (2R)-2,3-dihydroxy-3-methylbutanoate = 3-methyl-2-oxobutanoate + H2O. The catalysed reaction is (2R,3R)-2,3-dihydroxy-3-methylpentanoate = (S)-3-methyl-2-oxopentanoate + H2O. It participates in amino-acid biosynthesis; L-isoleucine biosynthesis; L-isoleucine from 2-oxobutanoate: step 3/4. It functions in the pathway amino-acid biosynthesis; L-valine biosynthesis; L-valine from pyruvate: step 3/4. Functionally, functions in the biosynthesis of branched-chain amino acids. Catalyzes the dehydration of (2R,3R)-2,3-dihydroxy-3-methylpentanoate (2,3-dihydroxy-3-methylvalerate) into 2-oxo-3-methylpentanoate (2-oxo-3-methylvalerate) and of (2R)-2,3-dihydroxy-3-methylbutanoate (2,3-dihydroxyisovalerate) into 2-oxo-3-methylbutanoate (2-oxoisovalerate), the penultimate precursor to L-isoleucine and L-valine, respectively. The sequence is that of Dihydroxy-acid dehydratase from Francisella tularensis subsp. tularensis (strain WY96-3418).